The sequence spans 396 residues: Elongation factor Tu (396 aa).

In terms of domain architecture, tr-type G spans 10-206; that stretch reads KPHVNVGTIG…ALDTYIPTPE (197 aa). A G1 region spans residues 19–26; the sequence is GHVDHGKT. 19 to 26 contributes to the GTP binding site; the sequence is GHVDHGKT. Residue threonine 26 coordinates Mg(2+). The segment at 60–64 is G2; sequence GITIN. A G3 region spans residues 81–84; sequence DCPG. GTP contacts are provided by residues 81–85 and 136–139; these read DCPGH and NKAD. The G4 stretch occupies residues 136-139; sequence NKAD. The segment at 174-176 is G5; the sequence is SAK.

It belongs to the TRAFAC class translation factor GTPase superfamily. Classic translation factor GTPase family. EF-Tu/EF-1A subfamily. Monomer.

The protein resides in the cytoplasm. The enzyme catalyses GTP + H2O = GDP + phosphate + H(+). GTP hydrolase that promotes the GTP-dependent binding of aminoacyl-tRNA to the A-site of ribosomes during protein biosynthesis. The protein is Elongation factor Tu of Janthinobacterium sp. (strain Marseille) (Minibacterium massiliensis).